Reading from the N-terminus, the 105-residue chain is Large ribosomal subunit protein uL24 (105 aa).

It belongs to the universal ribosomal protein uL24 family. Part of the 50S ribosomal subunit.

One of two assembly initiator proteins, it binds directly to the 5'-end of the 23S rRNA, where it nucleates assembly of the 50S subunit. In terms of biological role, one of the proteins that surrounds the polypeptide exit tunnel on the outside of the subunit. The protein is Large ribosomal subunit protein uL24 of Staphylococcus epidermidis (strain ATCC 35984 / DSM 28319 / BCRC 17069 / CCUG 31568 / BM 3577 / RP62A).